Reading from the N-terminus, the 161-residue chain is Nucleotide-binding protein H16_A3060 (161 aa).

This sequence belongs to the YajQ family.

Functionally, nucleotide-binding protein. This is Nucleotide-binding protein H16_A3060 from Cupriavidus necator (strain ATCC 17699 / DSM 428 / KCTC 22496 / NCIMB 10442 / H16 / Stanier 337) (Ralstonia eutropha).